We begin with the raw amino-acid sequence, 154 residues long: Large ribosomal subunit protein uL13 (154 aa).

It belongs to the universal ribosomal protein uL13 family. In terms of assembly, part of the 50S ribosomal subunit.

Functionally, this protein is one of the early assembly proteins of the 50S ribosomal subunit, although it is not seen to bind rRNA by itself. It is important during the early stages of 50S assembly. This Rhizobium meliloti (strain 1021) (Ensifer meliloti) protein is Large ribosomal subunit protein uL13.